Consider the following 149-residue polypeptide: Putative pre-16S rRNA nuclease (149 aa).

It belongs to the YqgF nuclease family.

Its subcellular location is the cytoplasm. In terms of biological role, could be a nuclease involved in processing of the 5'-end of pre-16S rRNA. This chain is Putative pre-16S rRNA nuclease, found in Burkholderia vietnamiensis (strain G4 / LMG 22486) (Burkholderia cepacia (strain R1808)).